The primary structure comprises 303 residues: UDP-3-O-acyl-N-acetylglucosamine deacetylase (303 aa).

Zn(2+)-binding residues include His78, His237, and Asp241. His264 functions as the Proton donor in the catalytic mechanism.

Belongs to the LpxC family. It depends on Zn(2+) as a cofactor.

It carries out the reaction a UDP-3-O-[(3R)-3-hydroxyacyl]-N-acetyl-alpha-D-glucosamine + H2O = a UDP-3-O-[(3R)-3-hydroxyacyl]-alpha-D-glucosamine + acetate. The protein operates within glycolipid biosynthesis; lipid IV(A) biosynthesis; lipid IV(A) from (3R)-3-hydroxytetradecanoyl-[acyl-carrier-protein] and UDP-N-acetyl-alpha-D-glucosamine: step 2/6. Functionally, catalyzes the hydrolysis of UDP-3-O-myristoyl-N-acetylglucosamine to form UDP-3-O-myristoylglucosamine and acetate, the committed step in lipid A biosynthesis. This chain is UDP-3-O-acyl-N-acetylglucosamine deacetylase, found in Stenotrophomonas maltophilia (strain R551-3).